The primary structure comprises 515 residues: SWI/SNF global transcription activator complex subunit snf59 (515 aa).

A disordered region spans residues 1–226; sequence MEEEDITLEH…IHHVDSKNEE (226 aa). Composition is skewed to basic and acidic residues over residues 7–37, 50–59, 73–85, 94–103, and 116–125; these read TLEH…DNSN, EEPKYHDNSN, EPEH…KEST, EEPKHHDNSN, and EEPKHHDSSN. Over residues 126–136 the composition is skewed to polar residues; it reads KESTNLDNSNM. Over residues 140–226 the composition is skewed to basic and acidic residues; the sequence is ENQKNFKIEE…IHHVDSKNEE (87 aa).

The protein belongs to the RSC7/SWP82 family. SWP82 subfamily. As to quaternary structure, component of the SWI/SNF global transcription activator complex composed of at least arp9, arp42, snf5, snf22, snf30, snf59, sol1, ssr1, ssr2, ssr3, ssr4 and tfg3.

The protein resides in the nucleus. Component of the SWI/SNF complex, an ATP-dependent chromatin remodeling complex, which is required for the positive and negative regulation of gene expression of a large number of genes. It changes chromatin structure by altering DNA-histone contacts within a nucleosome, leading eventually to a change in nucleosome position, thus facilitating or repressing binding of gene-specific transcription factors. The chain is SWI/SNF global transcription activator complex subunit snf59 (snf59) from Schizosaccharomyces pombe (strain 972 / ATCC 24843) (Fission yeast).